Here is a 288-residue protein sequence, read N- to C-terminus: uncharacterized protein (288 aa).

An HTH rpiR-type domain is found at 5–81 (GNVLNKIGSL…LELSIELATK (77 aa)). A DNA-binding region (H-T-H motif) is located at residues 41–60 (LSEIAKHLQVGEATLVRFCR). Residues 129-269 (VVKVLKKARR…YALLVQGEED (141 aa)) enclose the SIS domain.

This is an uncharacterized protein from Haemophilus influenzae (strain ATCC 51907 / DSM 11121 / KW20 / Rd).